Here is a 285-residue protein sequence, read N- to C-terminus: Ribosomal RNA small subunit methyltransferase I (285 aa).

Belongs to the methyltransferase superfamily. RsmI family.

It is found in the cytoplasm. The enzyme catalyses cytidine(1402) in 16S rRNA + S-adenosyl-L-methionine = 2'-O-methylcytidine(1402) in 16S rRNA + S-adenosyl-L-homocysteine + H(+). Its function is as follows. Catalyzes the 2'-O-methylation of the ribose of cytidine 1402 (C1402) in 16S rRNA. This is Ribosomal RNA small subunit methyltransferase I from Mycobacterium tuberculosis (strain CDC 1551 / Oshkosh).